We begin with the raw amino-acid sequence, 156 residues long: Small ribosomal subunit protein uS7 (156 aa).

Belongs to the universal ribosomal protein uS7 family. Part of the 30S ribosomal subunit. Contacts proteins S9 and S11.

Its function is as follows. One of the primary rRNA binding proteins, it binds directly to 16S rRNA where it nucleates assembly of the head domain of the 30S subunit. Is located at the subunit interface close to the decoding center, probably blocks exit of the E-site tRNA. The polypeptide is Small ribosomal subunit protein uS7 (Nitrosococcus oceani (strain ATCC 19707 / BCRC 17464 / JCM 30415 / NCIMB 11848 / C-107)).